Consider the following 51-residue polypeptide: Non-specific lipid-transfer protein (51 aa).

This sequence belongs to the plant LTP family.

Its function is as follows. Plant non-specific lipid-transfer proteins transfer phospholipids as well as galactolipids across membranes. May play a role in wax or cutin deposition in the cell walls of expanding epidermal cells and certain secretory tissues. The polypeptide is Non-specific lipid-transfer protein (Lycium barbarum (Barbary matrimony-vine)).